A 130-amino-acid chain; its full sequence is Secreted RxLR effector protein 66 (130 aa).

An N-terminal signal peptide occupies residues 1 to 21; the sequence is MHLRLLMSTVITATLIVSNNA. The RxLR-dEER motif lies at 32–62; the sequence is RALRGASTVGIAADNLLAAHFSPTLKHKESR. A helical transmembrane segment spans residues 104–124; that stretch reads GPAIAIFAGVAATFILIDYLI.

The protein belongs to the RxLR effector family.

Its subcellular location is the secreted. The protein resides in the host cytoplasm. It is found in the host nucleus. The protein localises to the membrane. Effector that acts as a broad suppressor of cell death to interrupt plant immunity. Inhibits cell death induced by cell death-inducing proteins, including the PAMP elicitor INF1 from P.infestans. This is Secreted RxLR effector protein 66 from Plasmopara viticola (Downy mildew of grapevine).